Reading from the N-terminus, the 455-residue chain is N(6)-adenosine-methyltransferase non-catalytic subunit METTL14 (455 aa).

A disordered region spans residues 21 to 96 (QQLGAESPDS…QHQEESGPYE (76 aa)). Residues 37–51 (SKDEQKEIEETRETC) are compositionally biased toward basic and acidic residues. A compositionally biased stretch (acidic residues) spans 69–82 (EGEDPEEDVEEQKE). 2 interaction with METTL3 regions span residues 134-135 (RD) and 236-237 (SG). Residues 244–253 (RMCLRKWGFR) form a positively charged region required for RNA-binding region. Interaction with METTL3 regions lie at residues 254 to 257 (RCED) and 277 to 286 (KAVFQRTKEH). The positively charged region required for RNA-binding stretch occupies residues 296–297 (RR). An interaction with METTL3 region spans residues 307 to 311 (NVDID). The interval 392–455 (ERLRPKSPPP…GGPHRGFPPR (64 aa)) is disordered. Over residues 407 to 421 (RGGGAPRGGRGGPAA) the composition is skewed to gly residues. Residues 423–441 (RGDRGRERNRPNFRGDRGG) show a composition bias toward basic and acidic residues.

It belongs to the MT-A70-like family. As to quaternary structure, heterodimer; heterodimerizes with mettl3 to form an antiparallel heterodimer that constitutes an active methyltransferase. Component of the WMM complex, a N6-methyltransferase complex composed of a catalytic subcomplex, named MAC, and of an associated subcomplex, named MACOM. The MAC subcomplex is composed of mettl3 and mettl14.

The protein localises to the nucleus. Functionally, the METTL3-METTL14 heterodimer forms a N6-methyltransferase complex that methylates adenosine residues at the N(6) position of some mRNAs and regulates the circadian clock, differentiation of embryonic stem cells and cortical neurogenesis. In the heterodimer formed with mettl3, mettl14 constitutes the RNA-binding scaffold that recognizes the substrate rather than the catalytic core. N6-methyladenosine (m6A), which takes place at the 5'-[AG]GAC-3' consensus sites of some mRNAs, plays a role in mRNA stability and processing. This chain is N(6)-adenosine-methyltransferase non-catalytic subunit METTL14 (mettl14), found in Danio rerio (Zebrafish).